The following is a 1102-amino-acid chain: Centrosomal protein of 128 kDa (1102 aa).

Residues serine 31, serine 248, and serine 290 each carry the phosphoserine modification. 2 coiled-coil regions span residues valine 215–glutamate 822 and glutamate 878–methionine 959. The tract at residues glutamine 326–aspartate 346 is disordered. Disordered stretches follow at residues serine 991–arginine 1048 and aspartate 1070–lysine 1102. Positions glutamine 1009 to proline 1027 are enriched in basic and acidic residues. Composition is skewed to polar residues over residues histidine 1039 to arginine 1048 and glycine 1076 to glutamine 1089. A compositionally biased stretch (basic and acidic residues) spans serine 1090 to lysine 1102.

The protein localises to the cytoplasm. Its subcellular location is the cytoskeleton. It is found in the microtubule organizing center. The protein resides in the centrosome. It localises to the centriole. The protein localises to the spindle pole. This chain is Centrosomal protein of 128 kDa (Cep128), found in Mus musculus (Mouse).